Reading from the N-terminus, the 321-residue chain is Lipoyl synthase (321 aa).

The [4Fe-4S] cluster site is built by cysteine 68, cysteine 73, cysteine 79, cysteine 94, cysteine 98, cysteine 101, and serine 308. The 218-residue stretch at 80 to 297 (FNHGTATFMI…REFAESIGFT (218 aa)) folds into the Radical SAM core domain.

It belongs to the radical SAM superfamily. Lipoyl synthase family. The cofactor is [4Fe-4S] cluster.

It is found in the cytoplasm. It catalyses the reaction [[Fe-S] cluster scaffold protein carrying a second [4Fe-4S](2+) cluster] + N(6)-octanoyl-L-lysyl-[protein] + 2 oxidized [2Fe-2S]-[ferredoxin] + 2 S-adenosyl-L-methionine + 4 H(+) = [[Fe-S] cluster scaffold protein] + N(6)-[(R)-dihydrolipoyl]-L-lysyl-[protein] + 4 Fe(3+) + 2 hydrogen sulfide + 2 5'-deoxyadenosine + 2 L-methionine + 2 reduced [2Fe-2S]-[ferredoxin]. It participates in protein modification; protein lipoylation via endogenous pathway; protein N(6)-(lipoyl)lysine from octanoyl-[acyl-carrier-protein]: step 2/2. In terms of biological role, catalyzes the radical-mediated insertion of two sulfur atoms into the C-6 and C-8 positions of the octanoyl moiety bound to the lipoyl domains of lipoate-dependent enzymes, thereby converting the octanoylated domains into lipoylated derivatives. The chain is Lipoyl synthase from Shewanella sediminis (strain HAW-EB3).